Reading from the N-terminus, the 247-residue chain is tRNA pseudouridine synthase A (247 aa).

Asp52 functions as the Nucleophile in the catalytic mechanism. Tyr113 contacts substrate.

The protein belongs to the tRNA pseudouridine synthase TruA family. Homodimer.

The enzyme catalyses uridine(38/39/40) in tRNA = pseudouridine(38/39/40) in tRNA. Functionally, formation of pseudouridine at positions 38, 39 and 40 in the anticodon stem and loop of transfer RNAs. In Sinorhizobium medicae (strain WSM419) (Ensifer medicae), this protein is tRNA pseudouridine synthase A.